The primary structure comprises 71 residues: MELPYTNLEMAFILLAFVIFSLFTLASIYTTPDDSNEEEEHEKKGREKKRKKSEKKKNCSEEEHRIEAVEL.

The helical transmembrane segment at 8 to 28 threads the bilayer; that stretch reads LEMAFILLAFVIFSLFTLASI. The interval 31-71 is disordered; sequence TPDDSNEEEEHEKKGREKKRKKSEKKKNCSEEEHRIEAVEL. The segment covering 46–55 has biased composition (basic residues); it reads REKKRKKSEK. A compositionally biased stretch (basic and acidic residues) spans 56 to 71; it reads KKNCSEEEHRIEAVEL. Asparagine 58 is a glycosylation site (N-linked (GlcNAc...) asparagine).

It is found in the membrane. In Homo sapiens (Human), this protein is Small integral membrane protein 31.